Reading from the N-terminus, the 562-residue chain is Aureusidin synthase (562 aa).

2 cysteine pairs are disulfide-bonded: Cys-71-Cys-86 and Cys-85-Cys-148. Cu cation-binding residues include His-147, His-168, His-177, His-301, His-305, and His-335. Positions Cys-151–His-168 form a cross-link, 2'-(S-cysteinyl)-histidine (Cys-His).

This sequence belongs to the tyrosinase family. Monomer. Requires Cu(2+) as cofactor. In terms of processing, glycosylated. Post-translationally, contains probably N- and C-terminal propeptides. As to expression, expressed in petals. Not detected in stems and leaves.

The protein resides in the vacuole lumen. The catalysed reaction is 2',4,4',6'-tetrahydroxychalcone 4'-O-beta-D-glucoside + O2 = aureusidin 6-O-beta-glucoside + H2O. The enzyme catalyses 2 2',3,4,4',6'-pentahydroxychalcone 4'-O-beta-D-glucoside + O2 + 2 H(+) = 2 aureusidin 6-O-beta-glucoside + 2 H2O. It catalyses the reaction 2',3,4,4',6'-pentahydroxychalcone 4'-O-beta-D-glucoside + O2 + H(+) = bracteatin 6-O-beta-glucoside + H2O. H(2)O(2) activates the 3-hydroxylation and oxidative cyclization of tetrahydroxychalcone but inhibits reaction with pentahydroxychalcone. Inhibited by phenylthiourea. Its function is as follows. Involved in the biosynthesis of aurones, plant flavonoids that provide yellow coloration to flowers. Can use tetrahydroxychalcone (THC), pentahydroxychalcone (PHC), THC 4'-glucoside and PHC 4'-glucoside as substrates, but not 2'-hydroxychalcone, 4-hydroxychalcone, PHC 3-glucoside, 2',6'-dihydroxy-4,4'-dimethoxychalcone, naringenin, eriodictyol and 4,4',6-trihydroxyaurone. Can also produce bracteatin from PHC. This chain is Aureusidin synthase (AS1), found in Antirrhinum majus (Garden snapdragon).